The following is a 472-amino-acid chain: Cysteine--tRNA ligase (472 aa).

Cys27 lines the Zn(2+) pocket. Positions 29–39 (PTVYNLIHIGN) match the 'HIGH' region motif. Zn(2+) is bound by residues Cys214, His239, and Glu243. A 'KMSKS' region motif is present at residues 271 to 275 (KMSKS). Lys274 serves as a coordination point for ATP.

Belongs to the class-I aminoacyl-tRNA synthetase family. Monomer. It depends on Zn(2+) as a cofactor.

The protein resides in the cytoplasm. The enzyme catalyses tRNA(Cys) + L-cysteine + ATP = L-cysteinyl-tRNA(Cys) + AMP + diphosphate. This Lachnospira eligens (strain ATCC 27750 / DSM 3376 / VPI C15-48 / C15-B4) (Eubacterium eligens) protein is Cysteine--tRNA ligase.